Consider the following 609-residue polypeptide: ATP-dependent lipid A-core flippase (609 aa).

Transmembrane regions (helical) follow at residues Leu-47–Ile-67, Ile-88–Phe-108, Ala-167–Val-187, Trp-190–Ile-210, Val-279–Gly-299, and Gly-305–Leu-325. The 294-residue stretch at Leu-47 to Lys-340 folds into the ABC transmembrane type-1 domain. Positions Val-372–Ser-606 constitute an ABC transporter domain. Gly-404–Thr-411 contacts ATP.

This sequence belongs to the ABC transporter superfamily. Lipid exporter (TC 3.A.1.106) family. As to quaternary structure, homodimer.

Its subcellular location is the cell inner membrane. The catalysed reaction is ATP + H2O + lipid A-core oligosaccharideSide 1 = ADP + phosphate + lipid A-core oligosaccharideSide 2.. In terms of biological role, involved in lipopolysaccharide (LPS) biosynthesis. Translocates lipid A-core from the inner to the outer leaflet of the inner membrane. Transmembrane domains (TMD) form a pore in the inner membrane and the ATP-binding domain (NBD) is responsible for energy generation. The chain is ATP-dependent lipid A-core flippase from Francisella tularensis subsp. tularensis (strain FSC 198).